The chain runs to 318 residues: Cytochrome c biogenesis protein CcsA (318 aa).

A run of 8 helical transmembrane segments spans residues 17 to 37 (VLAL…ISFW), 45 to 65 (SAVV…QLVL), 75 to 95 (ISNL…AQLL), 104 to 124 (IVSA…SFAL), 149 to 169 (VIMC…AVLF), 224 to 244 (TITV…VWAN), 258 to 275 (TWAL…HTRF), and 287 to 307 (VAVA…LLGI).

This sequence belongs to the CcmF/CycK/Ccl1/NrfE/CcsA family. In terms of assembly, may interact with ccs1.

It is found in the cellular thylakoid membrane. In terms of biological role, required during biogenesis of c-type cytochromes (cytochrome c6 and cytochrome f) at the step of heme attachment. The sequence is that of Cytochrome c biogenesis protein CcsA from Prochlorococcus marinus (strain MIT 9303).